Consider the following 181-residue polypeptide: MVEIMLLMPKKDWQWRYSDTYGVLSVSLGSEMEFLTPYKSKSLIPDALSELEFSVEHAKFYIDFIELLSKSLTISDAMKVQLALNGTAAHFLLKPQMPKSWFFDTSSMCVYSELGKVFQLKCRGAIAQVLVVETSIQASLVMLLSNELPLNDNKSLMQFECIKVMHDRLHPLKVSRAIAAA.

It belongs to the ZapC family. Interacts directly with FtsZ.

The protein localises to the cytoplasm. Functionally, contributes to the efficiency of the cell division process by stabilizing the polymeric form of the cell division protein FtsZ. Acts by promoting interactions between FtsZ protofilaments and suppressing the GTPase activity of FtsZ. The polypeptide is Cell division protein ZapC (Shewanella woodyi (strain ATCC 51908 / MS32)).